The following is a 96-amino-acid chain: Large ribosomal subunit protein bL28 (96 aa).

Belongs to the bacterial ribosomal protein bL28 family.

The polypeptide is Large ribosomal subunit protein bL28 (Agrobacterium fabrum (strain C58 / ATCC 33970) (Agrobacterium tumefaciens (strain C58))).